Consider the following 112-residue polypeptide: uncharacterized protein (112 aa).

This sequence to U.parvum UU089.1.

This is an uncharacterized protein from Synechocystis sp. (strain ATCC 27184 / PCC 6803 / Kazusa).